The chain runs to 635 residues: MITITLPDGSRREFEGPVSVMQVAHAIGPGLAKATIAGQIDGGHLVDASDLIEHDAMLRIITPEDQEALDIIRHSCAHLVGHAVKQLYPEAKMVIGPVIADGFYYDIYSKRPFTPEDLAAIEQRMVELIAQDYHVVKHITARHDVVRLFKERGEDYKLRLIEEMGPEVTAMGIYHHQEYVDMCRGPHVPNTRFLKAFKLTRISGAYWRGDTKNEQLQRIYGTAWADKKQLEAHMQRLQDAEKRDHRKIGKVQDLFHLQEEGPGLVFWHPKGWVIWQTIENYIRRVYRNSGYGELRCPQILDVSLWQKSGHWDNYKENMFFTDSEKRTYAVKPMNCPGHVQVFNQGLHSYRDLPIRYGEFGACHRNEPSGALHGLLRVRGFTQDDGHIFCTEAQIESEVTAFHRQALQVYADFGFEDIQIKIALRPDKRLGDSLSWDKAEAALRAALSACEVEWQELPGEGAFYGPKIEYHLKDAIGRTWQLGTIQVDFMMPGRLGAEYVDERSQRCHPVMLHRAIVGSMERFIGILIEHYAGIWPTWLAPVQVVVANITDAQYEYAERVHKALLNQGFRVNTDLRNEKIGYKIREHTLQRVPYLLVVGDREKENGTVAVRTCSREDLGAMSISAFVERLQAEQVV.

Residues 1–62 enclose the TGS domain; the sequence is MITITLPDGS…EHDAMLRIIT (62 aa). Positions 244–535 are catalytic; sequence DHRKIGKVQD…LIEHYAGIWP (292 aa). Zn(2+)-binding residues include cysteine 335, histidine 386, and histidine 512.

This sequence belongs to the class-II aminoacyl-tRNA synthetase family. Homodimer. The cofactor is Zn(2+).

The protein localises to the cytoplasm. It carries out the reaction tRNA(Thr) + L-threonine + ATP = L-threonyl-tRNA(Thr) + AMP + diphosphate + H(+). In terms of biological role, catalyzes the attachment of threonine to tRNA(Thr) in a two-step reaction: L-threonine is first activated by ATP to form Thr-AMP and then transferred to the acceptor end of tRNA(Thr). Also edits incorrectly charged L-seryl-tRNA(Thr). This Xylella fastidiosa (strain 9a5c) protein is Threonine--tRNA ligase.